A 434-amino-acid polypeptide reads, in one-letter code: Probable exopolygalacturonase A (434 aa).

A signal peptide spans 1–19 (MKLPILVTLFITLPALCVS). Asn46, Asn57, Asn106, Asn199, and Asn207 each carry an N-linked (GlcNAc...) asparagine glycan. A PbH1 1 repeat occupies 232–253 (SSNIVIQDSRIVNTDDCVSFKP). Catalysis depends on Asp246, which acts as the Proton donor. An intrachain disulfide couples Cys248 to Cys265. Residue Asn254 is glycosylated (N-linked (GlcNAc...) asparagine). The PbH1 2 repeat unit spans residues 255–275 (STQIVIQNLDCTGSHGISVGS). His269 is an active-site residue. N-linked (GlcNAc...) asparagine glycans are attached at residues Asn293, Asn329, and Asn354. A disulfide bridge connects residues Cys392 and Cys398. Asn400 carries N-linked (GlcNAc...) asparagine glycosylation.

This sequence belongs to the glycosyl hydrolase 28 family.

It is found in the secreted. It catalyses the reaction [(1-&gt;4)-alpha-D-galacturonosyl](n) + H2O = alpha-D-galacturonate + [(1-&gt;4)-alpha-D-galacturonosyl](n-1). Specific in hydrolyzing the terminal glycosidic bond of polygalacturonic acid and oligogalacturonates. The chain is Probable exopolygalacturonase A (pgxA) from Aspergillus niger (strain ATCC MYA-4892 / CBS 513.88 / FGSC A1513).